The sequence spans 211 residues: Regulator of G-protein signaling 2 (211 aa).

Disordered stretches follow at residues 14–33 (RPMDKSAGSGHKSEEKREKM) and 49–68 (LQNSSTPGKPKTGKKSKQQA). The necessary for membrane association stretch occupies residues 32-66 (KMKRTLLKDWKTRLSYFLQNSSTPGKPKTGKKSKQ). Residues 79-116 (LWSEAFDELLASKYGLAAFRAFLKSEFCEENIEFWLAC) form a necessary to inhibit protein synthesis region. Residues 83–199 (AFDELLASKY…LESEFYQDLC (117 aa)) form the RGS domain.

Interacts with GNAQ. Does not interact with GNAI1 and GNAI3. Interacts with EIF2B5. Interacts with PRKG1 (isoform alpha). Phosphorylated by protein kinase C. Phosphorylation by PRKG1 leads to activation of RGS2 activity. Expressed in acute myelogenous leukemia (AML) and in acute lymphoblastic leukemia (ALL).

It is found in the cell membrane. The protein localises to the cytoplasm. The protein resides in the nucleus. Its subcellular location is the nucleolus. It localises to the mitochondrion. Functionally, regulates G protein-coupled receptor signaling cascades. Inhibits signal transduction by increasing the GTPase activity of G protein alpha subunits, thereby driving them into their inactive GDP-bound form. It is involved in the negative regulation of the angiotensin-activated signaling pathway. Plays a role in the regulation of blood pressure in response to signaling via G protein-coupled receptors and GNAQ. Plays a role in regulating the constriction and relaxation of vascular smooth muscle. Binds EIF2B5 and blocks its activity, thereby inhibiting the translation of mRNA into protein. The sequence is that of Regulator of G-protein signaling 2 (RGS2) from Homo sapiens (Human).